Reading from the N-terminus, the 792-residue chain is MSNNGSSPLVLWYNQLGMNDVDRVGGKNASLGEMITNLSGMGVSVPNGFATTADAFNQFLDQSGVNQRIYELLDKTDIDDVTQLAKAGAQIRQWIIDTPFQPELENAIREAYAQLSADDENASFAVRSSATAEDMPDASFAGQQETFLNVQGFDAVLVAVKHVFASLFNDRAISYRVHQGYDHRGVALSAGVQRMVRSDLASSGVMFSIDTESGFDQVVFITSAWGLGEMVVQGAVNPDEFYVHKPTLAANRPAIVRRTMGSKKIRMVYAPTQEHGKQVKIEDVPQEQRDIFSLTNEEVQELAKQAVQIEKHYGRPMDIEWAKDGHTGKLFIVQARPETVRSRGQVMERYTLHSQGKIIAEGRAIGHRIGAGPVKVIHDISEMNRIEPGDVLVTDMTDPDWEPIMKKASAIVTNRGGRTCHAAIIARELGIPAVVGCGDATERMKDGENVTVSCAEGDTGYVYAELLEFSVKSSSVETMPDLPLKVMMNVGNPDRAFDFACLPNEGVGLARLEFIINRMIGVHPRALLEFDDQEPQLQNEIREMMKGFDSPREFYVGRLTEGIATLGAAFYPKRVIVRLSDFKSNEYANLVGGERYEPDEENPMLGFRGAGRYVSDSFRDCFALECEAVKRVRNDMGLTNVEIMIPFVRTVDQAKAVVEELARQGLKRGENGLKIIMMCEIPSNALLAEQFLEYFDGFSIGSNDMTQLALGLDRDSGVVSELFDERNDAVKALLSMAIRAAKKQGKYVGICGQGPSDHEDFAAWLMEEGIDSLSLNPDTVVQTWLSLAELKK.

His-421 functions as the Tele-phosphohistidine intermediate in the catalytic mechanism. Positions 511, 578, 680, 701, 702, 703, and 704 each coordinate substrate. Residue Glu-680 participates in Mg(2+) binding. Asp-704 is a Mg(2+) binding site. The active-site Proton donor is Cys-751.

It belongs to the PEP-utilizing enzyme family. As to quaternary structure, homodimer. Requires Mg(2+) as cofactor.

The catalysed reaction is pyruvate + ATP + H2O = phosphoenolpyruvate + AMP + phosphate + 2 H(+). The protein operates within carbohydrate biosynthesis; gluconeogenesis. With respect to regulation, activated by a Pi-dependent pyrophosphorylation and inactivated by an ADP-dependent phosphorylation on a regulatory threonine. Both reactions are mediated by the bifunctional serine/threonine kinase and phosphorylase PpsR. Functionally, catalyzes the phosphorylation of pyruvate to phosphoenolpyruvate. The chain is Phosphoenolpyruvate synthase (ppsA) from Escherichia coli (strain K12).